The primary structure comprises 218 residues: Thiamine-phosphate synthase (218 aa).

4-amino-2-methyl-5-(diphosphooxymethyl)pyrimidine-binding positions include 46–50 (QFRDK) and aspartate 83. Mg(2+) contacts are provided by aspartate 84 and aspartate 103. Serine 122 serves as a coordination point for 4-amino-2-methyl-5-(diphosphooxymethyl)pyrimidine. 149-151 (TNS) lines the 2-[(2R,5Z)-2-carboxy-4-methylthiazol-5(2H)-ylidene]ethyl phosphate pocket. Lysine 152 is a 4-amino-2-methyl-5-(diphosphooxymethyl)pyrimidine binding site. Residues glycine 181 and 201-202 (IT) contribute to the 2-[(2R,5Z)-2-carboxy-4-methylthiazol-5(2H)-ylidene]ethyl phosphate site.

This sequence belongs to the thiamine-phosphate synthase family. It depends on Mg(2+) as a cofactor.

The enzyme catalyses 2-[(2R,5Z)-2-carboxy-4-methylthiazol-5(2H)-ylidene]ethyl phosphate + 4-amino-2-methyl-5-(diphosphooxymethyl)pyrimidine + 2 H(+) = thiamine phosphate + CO2 + diphosphate. It carries out the reaction 2-(2-carboxy-4-methylthiazol-5-yl)ethyl phosphate + 4-amino-2-methyl-5-(diphosphooxymethyl)pyrimidine + 2 H(+) = thiamine phosphate + CO2 + diphosphate. The catalysed reaction is 4-methyl-5-(2-phosphooxyethyl)-thiazole + 4-amino-2-methyl-5-(diphosphooxymethyl)pyrimidine + H(+) = thiamine phosphate + diphosphate. Its pathway is cofactor biosynthesis; thiamine diphosphate biosynthesis; thiamine phosphate from 4-amino-2-methyl-5-diphosphomethylpyrimidine and 4-methyl-5-(2-phosphoethyl)-thiazole: step 1/1. Functionally, condenses 4-methyl-5-(beta-hydroxyethyl)thiazole monophosphate (THZ-P) and 2-methyl-4-amino-5-hydroxymethyl pyrimidine pyrophosphate (HMP-PP) to form thiamine monophosphate (TMP). The sequence is that of Thiamine-phosphate synthase from Actinobacillus pleuropneumoniae serotype 7 (strain AP76).